A 716-amino-acid polypeptide reads, in one-letter code: Penicillin-binding protein 2A (716 aa).

A helical transmembrane segment spans residues 22–42 (LNILFLAAFVIFTWIIVELGI). The active-site Acyl-ester intermediate is the Ser-397. Basic and acidic residues predominate over residues 689–706 (SKQDKEGTQQKNKDKIEE). The segment at 689-716 (SKQDKEGTQQKNKDKIEENAENTTSSDN) is disordered.

The protein belongs to the transpeptidase family.

The protein resides in the cell membrane. It localises to the forespore inner membrane. The enzyme catalyses Preferential cleavage: (Ac)2-L-Lys-D-Ala-|-D-Ala. Also transpeptidation of peptidyl-alanyl moieties that are N-acyl substituents of D-alanine.. It participates in cell wall biogenesis; peptidoglycan biosynthesis. Its function is as follows. Involved in the synthesis of peptidoglycan associated with cell wall elongation, especially following spore germination. Has a partially redundant function with PBP 1 (ponA) or PBP 4 (pbpD) during spore outgrowth. Plays a redundant role with PbpH in determining the rod shape of the cell during vegetative growth and spore outgrowth. In Bacillus subtilis (strain 168), this protein is Penicillin-binding protein 2A.